The following is a 179-amino-acid chain: ADP-ribosylation factor 1-like 1 (179 aa).

A lipid anchor (N-myristoyl glycine) is attached at glycine 2. The interval 3–16 (LFFSKISSFMFPNI) is important for the stable binding to the membranes. GTP-binding positions include 24–32 (GLDGAGKTT), 126–129 (NKQD), and alanine 160.

This sequence belongs to the small GTPase superfamily. Arf family.

Its subcellular location is the golgi apparatus membrane. The catalysed reaction is GTP + H2O = GDP + phosphate + H(+). With respect to regulation, alternates between an inactive GDP-bound form and an active GTP-bound form. Activated by a guanine nucleotide-exchange factor (GEF) and inactivated by GTPase-activating protein (GAP). In terms of biological role, small GTPase involved in protein trafficking between different compartments. Modulates vesicle budding and uncoating within the Golgi complex. In its GTP-bound form, triggers the recruitment of coatomer proteins to the Golgi membrane. The hydrolysis of ARF1-bound GTP, which is mediated by ARFGAPs proteins, is required for dissociation of coat proteins from Golgi membranes and vesicles. The protein is ADP-ribosylation factor 1-like 1 (arf-1.1) of Caenorhabditis elegans.